The sequence spans 802 residues: Outer membrane usher protein PefC (802 aa).

The N-terminal stretch at 1–24 is a signal peptide; that stretch reads MSFHHRVFKLSALSLALFSHLSFA. Cysteine 782 and cysteine 801 form a disulfide bridge.

It belongs to the fimbrial export usher family.

The protein resides in the cell outer membrane. In terms of biological role, involved in the export and assembly of FimA fimbrial subunits across the outer membrane. The polypeptide is Outer membrane usher protein PefC (pefC) (Salmonella typhimurium (strain LT2 / SGSC1412 / ATCC 700720)).